The following is a 128-amino-acid chain: MPPKGKGGKGAKGAAASGSGDSDKKEKAQKGGTAVKVRHILCEKHGKCMEAMEKIKSGMRFSEVAAQYSEDKARQGGDLGWMTRGSMVGPFQDAAFALPISTMDKPVYTDPPVKTKFGYHIIMVEGKK.

A disordered region spans residues Met1–Ala34. Residues Gly32–Gly126 enclose the PpiC domain.

The protein belongs to the PpiC/parvulin rotamase family. PIN4 subfamily.

The protein localises to the nucleus. The protein resides in the nucleolus. Its subcellular location is the cytoplasm. It is found in the cytoskeleton. It localises to the spindle. It carries out the reaction [protein]-peptidylproline (omega=180) = [protein]-peptidylproline (omega=0). In terms of biological role, may be involved as a ribosomal RNA processing factor in ribosome biogenesis. Binds to DNA. The chain is Peptidyl-prolyl cis-trans isomerase NIMA-interacting 4 (pin4) from Danio rerio (Zebrafish).